We begin with the raw amino-acid sequence, 429 residues long: GTPase Obg (429 aa).

Positions 1–158 constitute an Obg domain; it reads MFVDQVKIYV…RNVQLELKVL (158 aa). The segment at 124–145 is disordered; it reads RGNKRFATPANPAPELSENGEP. Residues 159 to 329 enclose the OBG-type G domain; sequence ADVGLVGFPS…LLLAIADKLE (171 aa). Residues 165 to 172, 190 to 194, 212 to 215, 282 to 285, and 310 to 312 contribute to the GTP site; these read GFPSVGKS, FTTIV, DLPG, NKMD, and SAV. Residues Ser-172 and Thr-192 each coordinate Mg(2+). Positions 351–429 constitute an OCT domain; it reads KYVAEEPDFE…LLDYEFEFMD (79 aa).

The protein belongs to the TRAFAC class OBG-HflX-like GTPase superfamily. OBG GTPase family. Monomer. It depends on Mg(2+) as a cofactor.

Its subcellular location is the cytoplasm. An essential GTPase which binds GTP, GDP and possibly (p)ppGpp with moderate affinity, with high nucleotide exchange rates and a fairly low GTP hydrolysis rate. Plays a role in control of the cell cycle, stress response, ribosome biogenesis and in those bacteria that undergo differentiation, in morphogenesis control. In Listeria monocytogenes serotype 4b (strain F2365), this protein is GTPase Obg.